Here is a 416-residue protein sequence, read N- to C-terminus: Gamma-glutamyl phosphate reductase (416 aa).

The protein belongs to the gamma-glutamyl phosphate reductase family.

It localises to the cytoplasm. The enzyme catalyses L-glutamate 5-semialdehyde + phosphate + NADP(+) = L-glutamyl 5-phosphate + NADPH + H(+). It functions in the pathway amino-acid biosynthesis; L-proline biosynthesis; L-glutamate 5-semialdehyde from L-glutamate: step 2/2. Its function is as follows. Catalyzes the NADPH-dependent reduction of L-glutamate 5-phosphate into L-glutamate 5-semialdehyde and phosphate. The product spontaneously undergoes cyclization to form 1-pyrroline-5-carboxylate. The chain is Gamma-glutamyl phosphate reductase from Salmonella paratyphi C (strain RKS4594).